Reading from the N-terminus, the 248-residue chain is 23S rRNA (guanosine(2553)-2'-O)-methyltransferase RlmP (248 aa).

Residues Arg-123, Gly-204, Val-224, and Leu-233 each contribute to the S-adenosyl-L-methionine site.

The protein belongs to the class IV-like SAM-binding methyltransferase superfamily. RNA methyltransferase TrmH family. As to quaternary structure, homodimer.

The protein localises to the cytoplasm. The enzyme catalyses guanosine(2553) in 23S rRNA + S-adenosyl-L-methionine = 2'-O-methylguanosine(2553) in 23S rRNA + S-adenosyl-L-homocysteine + H(+). Its function is as follows. Specifically methylates the ribose of guanosine 2553 (G2553) in 23S rRNA. When the target G2553 is mutated, is able to methylate the ribose of adenosine, but it cannot methylate cytidine nor uridine. Modifies free 23S rRNA but not the fully assembled ribosome nor the 50S subunit, suggesting that the modification occurs early during ribosome biogenesis. This is 23S rRNA (guanosine(2553)-2'-O)-methyltransferase RlmP from Bacillus subtilis (strain 168).